Here is a 593-residue protein sequence, read N- to C-terminus: Arginine--tRNA ligase (593 aa).

A 'HIGH' region motif is present at residues 138 to 148 (ANPTGPLHVGH).

The protein belongs to the class-I aminoacyl-tRNA synthetase family. Monomer.

The protein resides in the cytoplasm. The catalysed reaction is tRNA(Arg) + L-arginine + ATP = L-arginyl-tRNA(Arg) + AMP + diphosphate. In Burkholderia vietnamiensis (strain G4 / LMG 22486) (Burkholderia cepacia (strain R1808)), this protein is Arginine--tRNA ligase.